The sequence spans 508 residues: Light-independent protochlorophyllide reductase subunit B (508 aa).

Aspartate 36 lines the [4Fe-4S] cluster pocket. Aspartate 294 acts as the Proton donor in catalysis. 429 to 430 (GM) lines the substrate pocket.

This sequence belongs to the ChlB/BchB/BchZ family. Protochlorophyllide reductase is composed of three subunits; ChlL, ChlN and ChlB. Forms a heterotetramer of two ChlB and two ChlN subunits. It depends on [4Fe-4S] cluster as a cofactor.

It catalyses the reaction chlorophyllide a + oxidized 2[4Fe-4S]-[ferredoxin] + 2 ADP + 2 phosphate = protochlorophyllide a + reduced 2[4Fe-4S]-[ferredoxin] + 2 ATP + 2 H2O. It functions in the pathway porphyrin-containing compound metabolism; chlorophyll biosynthesis (light-independent). Functionally, component of the dark-operative protochlorophyllide reductase (DPOR) that uses Mg-ATP and reduced ferredoxin to reduce ring D of protochlorophyllide (Pchlide) to form chlorophyllide a (Chlide). This reaction is light-independent. The NB-protein (ChlN-ChlB) is the catalytic component of the complex. In Crocosphaera subtropica (strain ATCC 51142 / BH68) (Cyanothece sp. (strain ATCC 51142)), this protein is Light-independent protochlorophyllide reductase subunit B.